Reading from the N-terminus, the 350-residue chain is DNA repair protein rhp55 (350 aa).

Residue 51–58 (GAPGMGKT) coordinates ATP. A disordered region spans residues 331–350 (QSIPTNSSQRRKRSILECES).

Belongs to the RecA family. RAD55 subfamily.

It localises to the nucleus. Required for radiation resistance and meiotic viability and acts in recombination and recombinational DNA repair pathways. This chain is DNA repair protein rhp55 (rhp55), found in Schizosaccharomyces pombe (strain 972 / ATCC 24843) (Fission yeast).